The following is a 421-amino-acid chain: Synaptotagmin-12 (421 aa).

Residues Met1–Gly18 lie on the Vesicular side of the membrane. The chain crosses the membrane as a helical span at residues Trp19–Leu39. Residues Trp40–Asn421 are Cytoplasmic-facing. Ser97 is subject to Phosphoserine; by PKA. 2 positions are modified to phosphoserine: Ser99 and Ser214. 2 consecutive C2 domains span residues Thr152–Leu272 and Ala283–His416.

This sequence belongs to the synaptotagmin family. In terms of assembly, homodimer. Can also form heterodimers. Interacts with SYT1. In terms of processing, phosphorylation of Ser-97 is required for mossy-fiber long-term potentiation. As to expression, expressed in the brain, specifically in neurons of the cerebellum, cortex, hippocampus, olfactory bulb, brainstem and spinal cord (at protein level).

The protein resides in the cytoplasmic vesicle. The protein localises to the secretory vesicle. Its subcellular location is the synaptic vesicle membrane. Functionally, synaptic vesicle phosphoprotein that enhances spontaneous neurotransmitter release but does not effect induced neurotransmitter release. Unlike other synaptotagmins, it does not bind Ca(2+) or phospholipids. Essential for mossy-fiber long-term potentiation in the hippocampus. This is Synaptotagmin-12 from Rattus norvegicus (Rat).